The sequence spans 164 residues: Large ribosomal subunit protein uL11 (164 aa).

Belongs to the universal ribosomal protein uL11 family. As to quaternary structure, part of the ribosomal stalk of the 50S ribosomal subunit. Interacts with L10 and the large rRNA to form the base of the stalk. L10 forms an elongated spine to which L12 dimers bind in a sequential fashion forming a multimeric L10(L12)X complex.

In terms of biological role, forms part of the ribosomal stalk which helps the ribosome interact with GTP-bound translation factors. This Pyrococcus horikoshii (strain ATCC 700860 / DSM 12428 / JCM 9974 / NBRC 100139 / OT-3) protein is Large ribosomal subunit protein uL11.